The sequence spans 619 residues: Chaperone protein DnaK (619 aa).

A Phosphothreonine; by autocatalysis modification is found at T175. Residues 578–619 are disordered; the sequence is NGGAQGEGFDPNNMGGANAGTGAANSNDDNVVDADFEVQDDK. Residues 589-606 are compositionally biased toward low complexity; that stretch reads NNMGGANAGTGAANSNDD. The span at 607-619 shows a compositional bias: acidic residues; sequence NVVDADFEVQDDK.

This sequence belongs to the heat shock protein 70 family.

Functionally, acts as a chaperone. This Clostridium perfringens (strain SM101 / Type A) protein is Chaperone protein DnaK.